The following is a 141-amino-acid chain: Large ribosomal subunit protein uL11 (141 aa).

The protein belongs to the universal ribosomal protein uL11 family. In terms of assembly, part of the ribosomal stalk of the 50S ribosomal subunit. Interacts with L10 and the large rRNA to form the base of the stalk. L10 forms an elongated spine to which L12 dimers bind in a sequential fashion forming a multimeric L10(L12)X complex. One or more lysine residues are methylated.

Forms part of the ribosomal stalk which helps the ribosome interact with GTP-bound translation factors. The sequence is that of Large ribosomal subunit protein uL11 from Trichodesmium erythraeum (strain IMS101).